The sequence spans 838 residues: Alpha-glucan phosphorylase, H isozyme (838 aa).

Positions 1–21 (MEGGAKSNDVSAAPIAQPLSE) are disordered. Lys-684 is modified (N6-(pyridoxal phosphate)lysine).

Belongs to the glycogen phosphorylase family. Pyridoxal 5'-phosphate serves as cofactor.

Its subcellular location is the cytoplasm. It carries out the reaction [(1-&gt;4)-alpha-D-glucosyl](n) + phosphate = [(1-&gt;4)-alpha-D-glucosyl](n-1) + alpha-D-glucose 1-phosphate. Its function is as follows. Phosphorylase is an important allosteric enzyme in carbohydrate metabolism. Enzymes from different sources differ in their regulatory mechanisms and in their natural substrates. However, all known phosphorylases share catalytic and structural properties. This is Alpha-glucan phosphorylase, H isozyme from Solanum tuberosum (Potato).